Reading from the N-terminus, the 970-residue chain is Probable histidine kinase 6 (970 aa).

The Cytoplasmic portion of the chain corresponds to 1 to 12 (MGKPEARSGWRN). Residues 13-33 (AAAAAWVLVAVACAAYMHWHL) form a helical membrane-spanning segment. Residues 34 to 306 (RRETMDRAEE…YRQKPPLPWS (273 aa)) lie on the Extracellular side of the membrane. The region spanning 82-294 (FPSAIDQDTF…GDPFRAHEMR (213 aa)) is the CHASE domain. A helical membrane pass occupies residues 307–327 (AITNPLGTFVIWMLVGYIICA). At 328 to 970 (AWSRYDKVSE…LVVGTKESAV (643 aa)) the chain is on the cytoplasmic side. Positions 362–651 (TVSHEIRTPM…TFTFSAVLKR (290 aa)) constitute a Histidine kinase domain. His-365 is subject to Phosphohistidine; by autocatalysis. Response regulatory domains lie at 676-802 (KAIL…QQLL) and 827-962 (NILI…SRLV). At Asp-877 the chain carries 4-aspartylphosphate.

Activation probably requires a transfer of a phosphate group between a His in the transmitter domain and an Asp of the receiver domain. In terms of tissue distribution, highly expressed in spikelets and at lower levels in roots, young leaves, mature leaves and stems.

Its subcellular location is the cell membrane. It carries out the reaction ATP + protein L-histidine = ADP + protein N-phospho-L-histidine.. Cytokinin receptor related to bacterial two-component regulators. Functions as a histidine kinase and transmits the stress signal to a downstream MAPK cascade. This Oryza sativa subsp. japonica (Rice) protein is Probable histidine kinase 6.